An 884-amino-acid polypeptide reads, in one-letter code: Probable leucine--tRNA ligase, cytoplasmic (884 aa).

A 'HIGH' region motif is present at residues Pro-40–His-50. The short motif at Lys-566–Ser-570 is the 'KMSKS' region element. Residue Lys-569 participates in ATP binding.

The protein belongs to the class-I aminoacyl-tRNA synthetase family.

It is found in the cytoplasm. The enzyme catalyses tRNA(Leu) + L-leucine + ATP = L-leucyl-tRNA(Leu) + AMP + diphosphate. The protein is Probable leucine--tRNA ligase, cytoplasmic of Vairimorpha ceranae (strain BRL01) (Microsporidian parasite).